Reading from the N-terminus, the 348-residue chain is [FeFe] hydrogenase maturase subunit HydE (348 aa).

In terms of domain architecture, Radical SAM core spans 49–268; the sequence is DEVHIRAIIE…LLPDSNIPAT (220 aa). The [4Fe-4S] cluster site is built by C63, C67, and C70. [2Fe-2S] cluster-binding residues include C311, C319, and C322.

It belongs to the radical SAM superfamily. HydE family. In terms of assembly, monomer. [4Fe-4S] cluster is required as a cofactor. It depends on [2Fe-2S] cluster as a cofactor.

Required for the maturation of the [FeFe]-hydrogenase HydA. Catalyzes the reductive cleavage of S-adenosyl-L-methionine (in vitro), suggesting it may contribute to the biosynthesis of an essential sulfur-containing ligand that binds to the hydrogenase active site [2Fe-2S] cluster. The protein is [FeFe] hydrogenase maturase subunit HydE of Thermotoga maritima (strain ATCC 43589 / DSM 3109 / JCM 10099 / NBRC 100826 / MSB8).